The primary structure comprises 272 residues: Energy-coupling factor transporter ATP-binding protein EcfA1 (272 aa).

The ABC transporter domain maps to 5-239 (IKIDNLKYSY…RKALHENGLE (235 aa)). 37–44 (GHNGSGKS) provides a ligand contact to ATP. The Proton acceptor role is filled by glutamate 163.

This sequence belongs to the ABC transporter superfamily. Energy-coupling factor EcfA family. As to quaternary structure, forms a stable energy-coupling factor (ECF) transporter complex probably composed of 2 membrane-embedded substrate-binding proteins (S component), 2 ATP-binding proteins (A component) and 2 transmembrane proteins (T component). This complex interacts with a number of substrate-specific components, including FolT, PanT and RibU for 5-formyltetrahydrofolate, pantothenate and riboflavin respectively.

It is found in the cell membrane. Functionally, ATP-binding (A) component of a common energy-coupling factor (ECF) ABC-transporter complex. Unlike classic ABC transporters this ECF transporter provides the energy necessary to transport a number of different substrates including 5-formyltetrahydrofolate, pantothenate and riboflavin. Expression of the complex plus FolT in E.coli allows 5-formyltetrahydrofolate uptake; 5-formyltetrahydrofolate is not taken up in the absence of FolT or the EcfA1A2T complex. This Leuconostoc mesenteroides subsp. mesenteroides (strain ATCC 8293 / DSM 20343 / BCRC 11652 / CCM 1803 / JCM 6124 / NCDO 523 / NBRC 100496 / NCIMB 8023 / NCTC 12954 / NRRL B-1118 / 37Y) protein is Energy-coupling factor transporter ATP-binding protein EcfA1.